The chain runs to 101 residues: Urease subunit beta (101 aa).

The protein belongs to the urease beta subunit family. In terms of assembly, heterotrimer of UreA (gamma), UreB (beta) and UreC (alpha) subunits. Three heterotrimers associate to form the active enzyme.

Its subcellular location is the cytoplasm. It catalyses the reaction urea + 2 H2O + H(+) = hydrogencarbonate + 2 NH4(+). It functions in the pathway nitrogen metabolism; urea degradation; CO(2) and NH(3) from urea (urease route): step 1/1. The protein is Urease subunit beta of Variovorax paradoxus (strain S110).